The sequence spans 204 residues: uncharacterized protein (204 aa).

The first 16 residues, 1–16 (MKYTFLAVLSAVTVLA), serve as a signal peptide directing secretion.

It is found in the secreted. This is an uncharacterized protein from Arthroderma benhamiae (strain ATCC MYA-4681 / CBS 112371) (Trichophyton mentagrophytes).